The sequence spans 253 residues: Triosephosphate isomerase (253 aa).

9-11 (NWK) is a binding site for substrate. His96 functions as the Electrophile in the catalytic mechanism. The active-site Proton acceptor is the Glu169. Substrate contacts are provided by residues Gly175, Ser215, and 236-237 (GG).

The protein belongs to the triosephosphate isomerase family. As to quaternary structure, homodimer.

It localises to the cytoplasm. The catalysed reaction is D-glyceraldehyde 3-phosphate = dihydroxyacetone phosphate. The protein operates within carbohydrate biosynthesis; gluconeogenesis. It participates in carbohydrate degradation; glycolysis; D-glyceraldehyde 3-phosphate from glycerone phosphate: step 1/1. In terms of biological role, involved in the gluconeogenesis. Catalyzes stereospecifically the conversion of dihydroxyacetone phosphate (DHAP) to D-glyceraldehyde-3-phosphate (G3P). The sequence is that of Triosephosphate isomerase from Borrelia garinii subsp. bavariensis (strain ATCC BAA-2496 / DSM 23469 / PBi) (Borreliella bavariensis).